The sequence spans 691 residues: Elongation factor G (691 aa).

Positions 8–282 (ERVRNIGIAA…AVVDYLPAPV (275 aa)) constitute a tr-type G domain. GTP is bound by residues 17 to 24 (AHIDAGKT), 81 to 85 (DTPGH), and 135 to 138 (NKMD).

It belongs to the TRAFAC class translation factor GTPase superfamily. Classic translation factor GTPase family. EF-G/EF-2 subfamily.

The protein localises to the cytoplasm. Catalyzes the GTP-dependent ribosomal translocation step during translation elongation. During this step, the ribosome changes from the pre-translocational (PRE) to the post-translocational (POST) state as the newly formed A-site-bound peptidyl-tRNA and P-site-bound deacylated tRNA move to the P and E sites, respectively. Catalyzes the coordinated movement of the two tRNA molecules, the mRNA and conformational changes in the ribosome. This Prochlorococcus marinus (strain MIT 9312) protein is Elongation factor G.